The sequence spans 350 residues: MAFKIASSPHLSRSFQTSSLMQRVILCALPGVAVQCFFFGWGTVIQALLAMSVALLSEAVVLKLRARNVTDTLRDNSALLTGLLIGIAIPPLAPWWVTVIGTLFAIVIVKQLYGGLGHNIFNPAMAAYVMLLISFPVQMTSWVAPSVIASQPVDFIHSLQMIFTGASSSEINAYKLGFDGISMATPLDTIKTDLAMGLTTTESLSKAIFSDGFGVGWFWVNLAYLAGGLVMLKLKVIRWHITAGILAALFICSGVGYLLNPDTFTGPLLHLFSGATMLAAFFIATDPVTAATSVRGRLVFGALIGILVYIIRTFGGYPDAFAFAILLANLCAPFIDHYMKPRAYGHRSAT.

A run of 3 helical transmembrane segments spans residues 25–45 (ILCA…GTVI), 89–109 (IPPL…IVIV), and 129–149 (VMLL…SVIA). Thr185 is subject to FMN phosphoryl threonine. 5 consecutive transmembrane segments (helical) span residues 212-232 (GFGV…LVML), 239-259 (WHIT…GYLL), 264-284 (FTGP…FFIA), 298-318 (LVFG…GGYP), and 319-339 (DAFA…DHYM).

Belongs to the NqrB/RnfD family. In terms of assembly, the complex is composed of six subunits: RnfA, RnfB, RnfC, RnfD, RnfE and RnfG. The cofactor is FMN.

The protein localises to the cell inner membrane. In terms of biological role, part of a membrane-bound complex that couples electron transfer with translocation of ions across the membrane. This is Ion-translocating oxidoreductase complex subunit D from Shewanella sediminis (strain HAW-EB3).